Consider the following 551-residue polypeptide: E3 ubiquitin-protein ligase TRIM8 (551 aa).

Residues 15–56 (CPICLHVFVEPVQLPCKHNFCRGCIGEAWAKDSGLVRCPECN) form an RING-type zinc finger. B box-type zinc fingers lie at residues 92 to 132 (CVFC…ARGH) and 140 to 182 (VRAW…VCDV). A coiled-coil region spans residues 181–249 (DVEIRRNEIR…HQLLDEDLRQ (69 aa)).

This sequence belongs to the TRIM/RBCC family. As to quaternary structure, homodimer. Interacts with SOCS1 (via) SH2 domain and SOCS box. Interacts with HSP90AB1; prevents nucleus translocation of phosphorylated STAT3 and HSP90AB1. Interacts with MAP3K7/TAK1. Interacts with PIAS3. Interacts with TICAM1. Interacts with TRIM15; this interaction prevents TRIM8 cytoplasmic translocation. In terms of tissue distribution, widely expressed. Expressed in glomerular podocytes of kidneys.

The protein localises to the cytoplasm. The protein resides in the nucleus. Its subcellular location is the nuclear body. It catalyses the reaction S-ubiquitinyl-[E2 ubiquitin-conjugating enzyme]-L-cysteine + [acceptor protein]-L-lysine = [E2 ubiquitin-conjugating enzyme]-L-cysteine + N(6)-ubiquitinyl-[acceptor protein]-L-lysine.. It participates in protein modification; protein ubiquitination. Its function is as follows. E3 ubiquitin-protein ligase that participates in multiple biological processes including cell survival, differentiation, apoptosis, and in particular, the innate immune response. Participates in the activation of interferon-gamma signaling by promoting proteasomal degradation of the repressor SOCS1. Plays a positive role in the TNFalpha and IL-1beta signaling pathways. Mechanistically, induces the 'Lys-63'-linked polyubiquitination of MAP3K7/TAK1 component leading to the activation of NF-kappa-B. Also modulates STAT3 activity through negative regulation of PIAS3, either by degradation of PIAS3 through the ubiquitin-proteasome pathway or exclusion of PIAS3 from the nucleus. Negatively regulates TLR3/4-mediated innate immune response by catalyzing 'Lys-6'- and 'Lys-33'-linked polyubiquitination of TICAM1 and thereby disrupting the TICAM1-TBK1 interaction. This is E3 ubiquitin-protein ligase TRIM8 (TRIM8) from Homo sapiens (Human).